We begin with the raw amino-acid sequence, 280 residues long: Elongation factor Ts (280 aa).

The segment at 79-82 (TDFV) is involved in Mg(2+) ion dislocation from EF-Tu.

The protein belongs to the EF-Ts family.

It is found in the cytoplasm. Its function is as follows. Associates with the EF-Tu.GDP complex and induces the exchange of GDP to GTP. It remains bound to the aminoacyl-tRNA.EF-Tu.GTP complex up to the GTP hydrolysis stage on the ribosome. The sequence is that of Elongation factor Ts from Vibrio vulnificus (strain CMCP6).